Reading from the N-terminus, the 138-residue chain is MDQTLSDFGAVFVFLLLGTVFVVGGYLTARLLRPSRPNPEKLAVYECGEDAVGTSWVKFNIRFYVVALIFIIFDVEVVFLFPWATVFKQLGEFALIEALVFAGILIIGLAYAWVKGDLDWVRPTPNIPSMPQPPQKEK.

Transmembrane regions (helical) follow at residues 8–28 (FGAV…GYLT), 63–83 (FYVV…LFPW), and 93–113 (FALI…AYAW).

This sequence belongs to the complex I subunit 3 family. NDH-1 is composed of 14 different subunits. Subunits NuoA, H, J, K, L, M, N constitute the membrane sector of the complex.

Its subcellular location is the cell inner membrane. The catalysed reaction is a quinone + NADH + 5 H(+)(in) = a quinol + NAD(+) + 4 H(+)(out). In terms of biological role, NDH-1 shuttles electrons from NADH, via FMN and iron-sulfur (Fe-S) centers, to quinones in the respiratory chain. The immediate electron acceptor for the enzyme in this species is believed to be a menaquinone. Couples the redox reaction to proton translocation (for every two electrons transferred, four hydrogen ions are translocated across the cytoplasmic membrane), and thus conserves the redox energy in a proton gradient. This is NADH-quinone oxidoreductase subunit A from Prosthecochloris aestuarii (strain DSM 271 / SK 413).